The chain runs to 285 residues: MAGLDLGTTSRYVHNVDGGGGGQFTTDNHHEDDGGAGGNHHHHHHNHNHHQGLDLIASNDNSGLGGGGGGGSGDLVMRRPRGRPAGSKNKPKPPVIVTRESANTLRAHILEVGSGCDVFECISTYARRRQRGICVLSGTGTVTNVSIRQPTAAGAVVTLRGTFEILSLSGSFLPPPAPPGATSLTIFLAGAQGQVVGGNVVGELMAAGPVMVMAASFTNVAYERLPLDEHEEHLQSGGGGGGGNMYSEATGGGGGLPFFNLPMSMPQIGVESWQGNHAGAGRAPF.

Residues 17–95 (DGGGGGQFTT…GSKNKPKPPV (79 aa)) are disordered. The segment covering 39–50 (NHHHHHHNHNHH) has biased composition (basic residues). Residues 63 to 73 (GLGGGGGGGSG) show a composition bias toward gly residues. Positions 78-90 (RRPRGRPAGSKNK) form a DNA-binding region, a.T hook. One can recognise a PPC domain in the interval 102 to 238 (ANTLRAHILE…EHEEHLQSGG (137 aa)).

In terms of tissue distribution, preferentially expressed in roots, but also in flowers and leaves. Detected in the inflorescence meristem, floral primordia and developing reproductive organs.

It is found in the nucleus. The protein localises to the nucleoplasm. In terms of biological role, transcription factor that specifically binds AT-rich DNA sequences related to the nuclear matrix attachment regions (MARs). Binds to the MARs present in the ETTIN (ETT) promoter leading to a negative regulation of its gene expression. Functions as a molecular node downstream of the homeotic protein AGAMOUS (AG), regulating patterning and differentiation of reproductive organs. Acts as a chromatin remodeling factor that modifies the architecture of ETTIN (ETT) chromatin by modulating H3 methylation leading to the regulation of ETT expression. Seems to be involved in the regulation of a set of reproductives genes including CRABS CLAW (CRC), JAGGED (JAG) and KNUCKLES (KNU). The polypeptide is AT-hook motif nuclear-localized protein 21 (Arabidopsis thaliana (Mouse-ear cress)).